Consider the following 477-residue polypeptide: Kinesin-like protein KIN-1 (477 aa).

Residues 3–330 (NVTVCVRFRP…VRFGTRTKLI (328 aa)) form the Kinesin motor domain. 86 to 93 (GQTGAGKT) contributes to the ATP binding site. Positions 402–451 (QDAASQEVSLLTQAVEELKETVEELTDENERLRGELELAQEAAAAAAAAR) form a coiled coil.

This sequence belongs to the TRAFAC class myosin-kinesin ATPase superfamily. Kinesin family. KIN-1 subfamily. As to expression, widely expressed. Expressed in young roots and leaves, in mature roots, culm, sheath and leaves, and in panicles at various developmental stages. Strongest expression is detected in panicles. In the panicle, expression is detected in anthers, glumme, lemma and palea. In the spikelet, expression is detected in both microsporocyte and the anther walls.

The protein resides in the cytoplasm. Kinesin-like motor protein that exhibits microtubule-stimulated ATPase activity. Plays an essential role in male meiotic chromosomal dynamics, male gametogenesis and anther dehiscence. May play a minor and nonessential role in regulating meiotic spindle formation. The sequence is that of Kinesin-like protein KIN-1 from Oryza sativa subsp. japonica (Rice).